Here is a 437-residue protein sequence, read N- to C-terminus: GTPase Era, mitochondrial (437 aa).

The N-terminal 20 residues, Met1–Gln20, are a transit peptide targeting the mitochondrion. An Era-type G domain is found at Arg112 to Gly330. A G1 region spans residues Gly120–Ser127. Gly120–Ser127 serves as a coordination point for GTP. Residues His146 to Cys150 are G2. Residues Asp167–Gly170 form a G3 region. Residue Asp167 to Ile171 coordinates GTP. The residue at position 173 (Ser173) is a Phosphoserine. Asn236–Asp239 is a GTP binding site. The G4 stretch occupies residues Asn236 to Asp239. The disordered stretch occupies residues Ser272–Ser293. Residues Leu308–Ala310 are G5. A KH type-2 domain is found at Leu360–Lys437.

This sequence belongs to the TRAFAC class TrmE-Era-EngA-EngB-Septin-like GTPase superfamily. Era GTPase family.

The protein localises to the mitochondrion matrix. The protein resides in the mitochondrion inner membrane. Functionally, probable GTPase that plays a role in the mitochondrial ribosomal small subunit assembly. Specifically binds the 12S mitochondrial rRNA (12S mt-rRNA) to a 33 nucleotide section delineating the 3' terminal stem-loop region. May act as a chaperone that protects the 12S mt-rRNA on the 28S mitoribosomal subunit during ribosomal small subunit assembly. The polypeptide is GTPase Era, mitochondrial (Eral1) (Rattus norvegicus (Rat)).